Consider the following 1033-residue polypeptide: uncharacterized protein (1033 aa).

4 coiled-coil regions span residues 212–326 (EIFK…KMNN), 405–582 (ILNN…LYKF), 615–771 (LEKE…LKLN), and 797–1019 (KMKI…NIDN).

This is an uncharacterized protein from Plasmodium falciparum (isolate 3D7).